Reading from the N-terminus, the 358-residue chain is MFHAKKPSSMNGSYENRAMCVQGDSGLVLTTDPKPRLRWTVELHERFVDAVAQLGGPDKATPKTIMRVMGVKGLTLYHLKSHLQKFRLGKQPHKEYGDHSTKEGSRASAMDIQRNVASSSGMMSRNMNEMQMEVQRRLHEQLEVQRHLQLRIEAQGKYMQSILERACQTLAGENMAAATAAAAVGGGYKGNLGSSSLSAAVGPPPHPLSFPPFQDLNIYGNTTDQVLDHHNFHHQNIENHFTGNNAADTNIYLGKKRPNPNFGNDVRKGLLMWSDQDHDLSANQSIDDEHRIQIQMATHVSTDLDSLSEIYERKSGLSGDEGNNGGKLLERPSPRRSPLSPMMNPNGGLIQGRNSPFG.

Residues 31-91 (TDPKPRLRWT…HLQKFRLGKQ (61 aa)) enclose the HTH myb-type domain. The H-T-H motif DNA-binding region spans 62–87 (PKTIMRVMGVKGLTLYHLKSHLQKFR). Residues 125–145 (RNMNEMQMEVQRRLHEQLEVQ) are a coiled coil. The LHEQLE signature appears at 138-143 (LHEQLE). The segment at 313–358 (RKSGLSGDEGNNGGKLLERPSPRRSPLSPMMNPNGGLIQGRNSPFG) is disordered.

Belongs to the MYB-CC family. As to expression, expressed in shoots and roots, specifically in the developing protophloem sieve elements. Detected in phloem and/or cambium. Expressed in the phloem tissues of various organs, including leaves and cotyledons, during vegetative growth.

The protein localises to the nucleus. In terms of biological role, transcription factor required for phloem identity. Has a dual role both in promoting phloem differentiation and in repressing xylem differentiation during vascular development. Regulates the expression of the transcription factor NAC045 (AC A4VCM0). May activate the transcription of specific genes involved in phosphate uptake or assimilation. Promotes flowering through transcriptional activation of both FT and its transport machinery component, FTIP1. This chain is Myb family transcription factor APL, found in Arabidopsis thaliana (Mouse-ear cress).